The sequence spans 254 residues: Emerin (254 aa).

At methionine 1 the chain carries N-acetylmethionine. One can recognise an LEM domain in the interval 1–45 (MDNYADLSDTELTTLLRRYNIPHGPVVGSTRRLYEKKIFEYETQR). 2 positions are modified to phosphoserine: serine 8 and serine 29. An interaction with F-actin region spans residues 46–222 (RRLSPPSSSA…PGAGLGQDRQ (177 aa)). Serine 49 carries the phosphoserine; by PKA modification. A phosphoserine mark is found at serine 54, serine 60, serine 87, serine 98, serine 141, serine 142, and serine 143. Residue tyrosine 161 is modified to Phosphotyrosine. Residues 168-186 (RPVSASRSSLDLSYYPTSS) are interaction with CTNNB1. Phosphoserine is present on residues serine 171, serine 173, and serine 175. A helical transmembrane segment spans residues 223-243 (VPLWGQLLLFLVFVIVLFFIY).

Interacts with lamins A and C, BANF1, GMCL, BCLAF1 and YTHDC1/YT521. Interacts with TMEM43; the interaction retains emerin in the nuclear inner membrane. Interacts with SUN1 and SUN2. Interacts with ACTB, SPTAN1, F-actin, CTNNB1 and beta-tubulin. Interacts with TMEM201. Interacts with NEMP1. Found in four different phosphorylated forms, three of which appear to be associated with the cell cycle. Skeletal muscle, heart, colon, testis, ovary and pancreas.

Its subcellular location is the nucleus inner membrane. It is found in the nucleus outer membrane. Stabilizes and promotes the formation of a nuclear actin cortical network. Stimulates actin polymerization in vitro by binding and stabilizing the pointed end of growing filaments. Inhibits beta-catenin activity by preventing its accumulation in the nucleus. Acts by influencing the nuclear accumulation of beta-catenin through a CRM1-dependent export pathway. Links centrosomes to the nuclear envelope via a microtubule association. Required for proper localization of non-farnesylated prelamin-A/C. Together with NEMP1, contributes to nuclear envelope stiffness in germ cells. EMD and BAF are cooperative cofactors of HIV-1 infection. Association of EMD with the viral DNA requires the presence of BAF and viral integrase. The association of viral DNA with chromatin requires the presence of BAF and EMD. The chain is Emerin (EMD) from Homo sapiens (Human).